We begin with the raw amino-acid sequence, 357 residues long: DNA replication and repair protein RecF (357 aa).

30–37 (GANGSGKT) contacts ATP.

This sequence belongs to the RecF family.

The protein localises to the cytoplasm. In terms of biological role, the RecF protein is involved in DNA metabolism; it is required for DNA replication and normal SOS inducibility. RecF binds preferentially to single-stranded, linear DNA. It also seems to bind ATP. This Shigella dysenteriae serotype 1 (strain Sd197) protein is DNA replication and repair protein RecF.